The following is a 221-amino-acid chain: Adenylate kinase (221 aa).

10–15 provides a ligand contact to ATP; the sequence is GAGKGT. Residues 30 to 59 form an NMP region; it reads STGDMLRAAVKARTELGVAAKKIMDAGGLV. AMP contacts are provided by residues Thr31, Arg36, 57-59, 85-88, and Gln92; these read GLV and GFPR. The LID stretch occupies residues 122–159; that stretch reads GRRVHLASGRTYHIKFNPPKVEGKDDITGDPLIQRDDD. Residues Arg123 and 132-133 contribute to the ATP site; that span reads TY. AMP contacts are provided by Arg156 and Arg167. Residue Ser207 coordinates ATP.

The protein belongs to the adenylate kinase family. In terms of assembly, monomer.

Its subcellular location is the cytoplasm. It carries out the reaction AMP + ATP = 2 ADP. It functions in the pathway purine metabolism; AMP biosynthesis via salvage pathway; AMP from ADP: step 1/1. Catalyzes the reversible transfer of the terminal phosphate group between ATP and AMP. Plays an important role in cellular energy homeostasis and in adenine nucleotide metabolism. This is Adenylate kinase from Polynucleobacter necessarius subsp. necessarius (strain STIR1).